Reading from the N-terminus, the 419-residue chain is Serine hydroxymethyltransferase (419 aa).

(6S)-5,6,7,8-tetrahydrofolate contacts are provided by residues leucine 121 and 125 to 127; that span reads GHL. Lysine 229 carries the post-translational modification N6-(pyridoxal phosphate)lysine.

This sequence belongs to the SHMT family. As to quaternary structure, homodimer. Requires pyridoxal 5'-phosphate as cofactor.

The protein localises to the cytoplasm. The enzyme catalyses (6R)-5,10-methylene-5,6,7,8-tetrahydrofolate + glycine + H2O = (6S)-5,6,7,8-tetrahydrofolate + L-serine. It functions in the pathway one-carbon metabolism; tetrahydrofolate interconversion. Its pathway is amino-acid biosynthesis; glycine biosynthesis; glycine from L-serine: step 1/1. Functionally, catalyzes the reversible interconversion of serine and glycine with tetrahydrofolate (THF) serving as the one-carbon carrier. This reaction serves as the major source of one-carbon groups required for the biosynthesis of purines, thymidylate, methionine, and other important biomolecules. Also exhibits THF-independent aldolase activity toward beta-hydroxyamino acids, producing glycine and aldehydes, via a retro-aldol mechanism. In Streptomyces griseus subsp. griseus (strain JCM 4626 / CBS 651.72 / NBRC 13350 / KCC S-0626 / ISP 5235), this protein is Serine hydroxymethyltransferase.